Reading from the N-terminus, the 344-residue chain is Ribosomal RNA large subunit methyltransferase Cfr (344 aa).

The active-site Proton acceptor is the E90. In terms of domain architecture, Radical SAM core spans 97–330 (KQGWESFCIS…ATVRTQFGSE (234 aa)). Cysteines 104 and 335 form a disulfide. C111, C115, and C118 together coordinate [4Fe-4S] cluster. S-adenosyl-L-methionine-binding positions include 157-158 (GE), S188, 211-213 (SLH), and N292. C335 (S-methylcysteine intermediate) is an active-site residue.

It belongs to the radical SAM superfamily. RlmN family. Cfr subfamily. It depends on [4Fe-4S] cluster as a cofactor.

It localises to the cytoplasm. It carries out the reaction adenosine(2503) in 23S rRNA + 2 reduced [2Fe-2S]-[ferredoxin] + 2 S-adenosyl-L-methionine = 8-methyladenosine(2503) in 23S rRNA + 5'-deoxyadenosine + L-methionine + 2 oxidized [2Fe-2S]-[ferredoxin] + S-adenosyl-L-homocysteine. In terms of biological role, specifically methylates position 8 of adenine 2503 in 23S rRNA. Confers resistance to some classes of antibiotics. This chain is Ribosomal RNA large subunit methyltransferase Cfr, found in Clostridium botulinum (strain Loch Maree / Type A3).